A 416-amino-acid polypeptide reads, in one-letter code: Orexin/Hypocretin receptor type 1 (416 aa).

The interval 1 to 22 (MEPSATPGAQPGVPTSSGEPFH) is disordered. At 1 to 46 (MEPSATPGAQPGVPTSSGEPFHLPPDYEDEFLRYLWRDYLYPKQYE) the chain is on the extracellular side. The segment at 26–41 (DYEDEFLRYLWRDYLY) is required for response to orexin-A. Residues 47–67 (WVLIAAYVAVFLIALVGNTLV) form a helical membrane-spanning segment. At 68-82 (CLAVWRNHHMRTVTN) the chain is on the cytoplasmic side. The helical transmembrane segment at 83-105 (YFIVNLSLADVLVTAICLPASLL) threads the bilayer. Residues 106 to 119 (VDITESWLFGQALC) are Extracellular-facing. An intrachain disulfide couples cysteine 119 to cysteine 202. A helical membrane pass occupies residues 120 to 140 (KVIPYLQAVSVSVAVLTLSFI). Residues 141–160 (ALDRWYAICHPLLFKSTARR) are Cytoplasmic-facing. The chain crosses the membrane as a helical span at residues 161–182 (ARGSILGIWAVSLAVMVPQAAV). Over 183–213 (MECSSVLPELANRTRLFSVCDEHWADELYPK) the chain is Extracellular. An N-linked (GlcNAc...) asparagine glycan is attached at asparagine 194. The helical transmembrane segment at 214 to 235 (IYHSCFFIVTYLAPLGLMAMAY) threads the bilayer. The Cytoplasmic segment spans residues 236–298 (FQIFRKLWGR…QMRARRKTAK (63 aa)). A helical transmembrane segment spans residues 299–321 (MLMVVLLVFALCYLPISVLNVLK). Over 322–336 (RVFGMFRQASDREAV) the chain is Extracellular. A helical membrane pass occupies residues 337–360 (YACFTFSHWLVYANSAANPIIYNF). Topologically, residues 361–416 (LSGKFREQFKAAFSCCLPGLGPGSSARHKSLSLQSRCSVSKVSEHVVLTTVTTVLS) are cytoplasmic.

The protein belongs to the G-protein coupled receptor 1 family. In terms of tissue distribution, widely expressed.

The protein resides in the cell membrane. Moderately selective excitatory receptor for orexin-A and, with a lower affinity, for orexin-B neuropeptide. Triggers an increase in cytoplasmic Ca(2+) levels in response to orexin-A binding. The protein is Orexin/Hypocretin receptor type 1 of Mus musculus (Mouse).